The following is a 541-amino-acid chain: Peptidyl-alpha-hydroxyglycine alpha-amidating lyase 1 (541 aa).

Positions 1–33 (MKSTDSAKCLGSKSLAICCLLLHLLLCIRPAVS) are cleaved as a signal peptide. Topologically, residues 34-458 (QTQSPQRYLH…VAVHHPSGKA (425 aa)) are extracellular. N-linked (GlcNAc...) asparagine glycosylation is present at Asn-92. 3 NHL repeats span residues 164–205 (GKVQ…FPPR), 215–258 (LGDA…YSRK), and 272–314 (GISY…FLSS). Cystine bridges form between Cys-228–Cys-248 and Cys-299–Cys-310. The N-linked (GlcNAc...) asparagine glycan is linked to Asn-315. One copy of the NHL 4 repeat lies at 374–418 (KQLVSKFGPNNLQFQNPHDVAVTADGNEIYVAELNPMRIHKFVHR). Residues 459 to 479 (ILVASLMLLFAGSTFALALIF) traverse the membrane as a helical segment. Residues 480 to 541 (ARRRKRGCLP…TKTLASAQYA (62 aa)) lie on the Cytoplasmic side of the membrane. Residues 521 to 541 (LDQQASDEEQETKTLASAQYA) are disordered.

Belongs to the peptidyl-alpha-hydroxyglycine alpha-amidating lyase family. Zn(2+) serves as cofactor. Post-translationally, N-glycosylated. In terms of tissue distribution, widely expressed. In mature larvae, it is ubiquitously expressed with a low expression in all cells and a stronger expression in a subset of neurons. Colocalizes with neuropeptide proctolin. In adults, weak expression is observed in most neuronal cell bodies and in scattered large cells throughout the protocerebrum and also in the subesophageal neuromeres (at protein level).

Its subcellular location is the cell membrane. It catalyses the reaction a [peptide]-C-terminal (2S)-2-hydroxyglycine = a [peptide]-C-terminal amide + glyoxylate. Functionally, peptidyl-alpha-hydroxylglycine alpha-amidating lyase that catalyzes an essential reaction in C-terminal alpha-amidation of peptides. Mediates the dismutation of the unstable peptidyl(2-hydroxyglycine) intermediate to glyoxylate and the corresponding desglycine peptide amide. C-terminal amidation of peptides such as neuropeptides is essential for full biological activity. This chain is Peptidyl-alpha-hydroxyglycine alpha-amidating lyase 1 (Pal1), found in Drosophila melanogaster (Fruit fly).